We begin with the raw amino-acid sequence, 100 residues long: Large ribosomal subunit protein uL23 (100 aa).

The protein belongs to the universal ribosomal protein uL23 family. As to quaternary structure, part of the 50S ribosomal subunit. Contacts protein L29, and trigger factor when it is bound to the ribosome.

Its function is as follows. One of the early assembly proteins it binds 23S rRNA. One of the proteins that surrounds the polypeptide exit tunnel on the outside of the ribosome. Forms the main docking site for trigger factor binding to the ribosome. The sequence is that of Large ribosomal subunit protein uL23 from Acaryochloris marina (strain MBIC 11017).